Reading from the N-terminus, the 316-residue chain is Acetaldehyde dehydrogenase 3 (316 aa).

Residue 12–15 coordinates NAD(+); sequence SGNI. Residue Cys-132 is the Acyl-thioester intermediate of the active site. NAD(+) is bound by residues 163–171 and Asn-289; that span reads SAGPGTRAN.

Belongs to the acetaldehyde dehydrogenase family.

The enzyme catalyses acetaldehyde + NAD(+) + CoA = acetyl-CoA + NADH + H(+). This Comamonas testosteroni (Pseudomonas testosteroni) protein is Acetaldehyde dehydrogenase 3 (mhpF).